Consider the following 86-residue polypeptide: Small ribosomal subunit protein bS18 (86 aa).

This sequence belongs to the bacterial ribosomal protein bS18 family. As to quaternary structure, part of the 30S ribosomal subunit. Forms a tight heterodimer with protein bS6.

Its function is as follows. Binds as a heterodimer with protein bS6 to the central domain of the 16S rRNA, where it helps stabilize the platform of the 30S subunit. This Maridesulfovibrio salexigens (strain ATCC 14822 / DSM 2638 / NCIMB 8403 / VKM B-1763) (Desulfovibrio salexigens) protein is Small ribosomal subunit protein bS18.